Reading from the N-terminus, the 205-residue chain is Phosphoribosyl-dephospho-CoA transferase (205 aa).

Residues aspartate 134 and aspartate 136 contribute to the active site.

Belongs to the MdcG family.

It catalyses the reaction apo-[malonate decarboxylase ACP] + 2'-(5''-triphospho-alpha-D-ribosyl)-3'-dephospho-CoA = holo-[malonate decarboxylase ACP] + diphosphate. In terms of biological role, transfers 2'-(5-triphosphoribosyl)-3'-dephosphocoenzyme-A to the apo-[acyl-carrier-protein] of the malonate decarboxylase to yield holo-[acyl-carrier-protein]. In Klebsiella pneumoniae subsp. pneumoniae (strain ATCC 700721 / MGH 78578), this protein is Phosphoribosyl-dephospho-CoA transferase.